We begin with the raw amino-acid sequence, 164 residues long: Phosphopantetheine adenylyltransferase (164 aa).

Ser-9 contacts substrate. Residues 9–10 (SF) and His-17 contribute to the ATP site. Substrate-binding residues include Lys-41, Val-78, and Arg-92. ATP is bound by residues 93 to 95 (GLR), Glu-103, and 128 to 134 (SRPITAT).

The protein belongs to the bacterial CoaD family. As to quaternary structure, homohexamer. It depends on Mg(2+) as a cofactor.

Its subcellular location is the cytoplasm. It carries out the reaction (R)-4'-phosphopantetheine + ATP + H(+) = 3'-dephospho-CoA + diphosphate. It participates in cofactor biosynthesis; coenzyme A biosynthesis; CoA from (R)-pantothenate: step 4/5. Reversibly transfers an adenylyl group from ATP to 4'-phosphopantetheine, yielding dephospho-CoA (dPCoA) and pyrophosphate. This is Phosphopantetheine adenylyltransferase from Rhizobium etli (strain ATCC 51251 / DSM 11541 / JCM 21823 / NBRC 15573 / CFN 42).